Reading from the N-terminus, the 289-residue chain is Testis-expressed protein 26 (289 aa).

Positions 1–26 (MEQPGPRAPDPSLCHHNLQPTDDPNW) are disordered. 5 mn regions span residues 30 to 42 (ATTM…PKTG), 69 to 83 (QTQY…SHSK), 144 to 157 (ISLT…RSKA), 179 to 193 (DTEF…AKIP), and 233 to 247 (QTTY…YPDF).

The chain is Testis-expressed protein 26 (TEX26) from Homo sapiens (Human).